The following is a 238-amino-acid chain: 7-cyano-7-deazaguanine synthase (238 aa).

Residue 10-20 participates in ATP binding; that stretch reads LSGGLDSSTVL. Zn(2+)-binding residues include C190, C198, C201, and C204.

The protein belongs to the QueC family. Zn(2+) serves as cofactor.

The enzyme catalyses 7-carboxy-7-deazaguanine + NH4(+) + ATP = 7-cyano-7-deazaguanine + ADP + phosphate + H2O + H(+). It participates in purine metabolism; 7-cyano-7-deazaguanine biosynthesis. Functionally, catalyzes the ATP-dependent conversion of 7-carboxy-7-deazaguanine (CDG) to 7-cyano-7-deazaguanine (preQ(0)). This Thermoplasma acidophilum (strain ATCC 25905 / DSM 1728 / JCM 9062 / NBRC 15155 / AMRC-C165) protein is 7-cyano-7-deazaguanine synthase.